The sequence spans 139 residues: Large ribosomal subunit protein uL16 (139 aa).

Residues 1–19 (MLIPRRVKHRKQHHPKRSG) are compositionally biased toward basic residues. The interval 1–25 (MLIPRRVKHRKQHHPKRSGMSKGGT) is disordered.

The protein belongs to the universal ribosomal protein uL16 family. As to quaternary structure, part of the 50S ribosomal subunit.

Functionally, binds 23S rRNA and is also seen to make contacts with the A and possibly P site tRNAs. This Streptomyces griseus subsp. griseus (strain JCM 4626 / CBS 651.72 / NBRC 13350 / KCC S-0626 / ISP 5235) protein is Large ribosomal subunit protein uL16.